We begin with the raw amino-acid sequence, 589 residues long: Multidrug transporter FLR2 (589 aa).

A disordered region spans residues 50–116; it reads KEEMKQDNQT…SSTKDASKPE (67 aa). The span at 56-73 shows a compositional bias: low complexity; that stretch reads DNQTSTDSMSTSTQQETD. Asparagine 57 carries N-linked (GlcNAc...) asparagine glycosylation. A compositionally biased stretch (basic and acidic residues) spans 107 to 116; it reads SSTKDASKPE. Asparagine 136 is a glycosylation site (N-linked (GlcNAc...) asparagine). A run of 12 helical transmembrane segments spans residues 143 to 163, 179 to 199, 211 to 231, 234 to 254, 275 to 295, 301 to 321, 378 to 398, 417 to 437, 455 to 475, 480 to 500, 516 to 536, and 551 to 571; these read TFVIVQLMVLTCINYMGSSIY, VVGTLNLSMYVLGYAIGPIIF, MPLYLWTFILFTILQVACALV, IAGLVILRFITGILCSPVLAT, WAVGAVAAPVMAPILGAAMVV, WIFWLMLFMCGATLLSIIFFF, PIILAFDVYIALCYGAFYLFF, GLAFLGFCVGCVFAYTALIIF, LFLILAMCLGWCLPFSLFFFG, IHWILPIIAELFFVLSVFNLF, ASVFAGNGLCRGAFAAAFPLF, and VAWGSTLIGFITVVLSLIPFV.

It belongs to the major facilitator superfamily.

The protein localises to the cell membrane. Its function is as follows. Multidrug transporter that confers resistance to 5-flucytosine (5-FC) and clotrimazole. Further confers azole drug resistance. Plays direct roles in extrusion of 5-flucytosine and clotrimazole. In Candida glabrata (strain ATCC 2001 / BCRC 20586 / JCM 3761 / NBRC 0622 / NRRL Y-65 / CBS 138) (Yeast), this protein is Multidrug transporter FLR2.